Consider the following 398-residue polypeptide: Cytochrome b (398 aa).

The next 4 helical transmembrane spans lie at 38-58 (FGPL…FLAM), 82-104 (WFLR…FHMF), 119-139 (VRCS…IGYV), and 185-205 (FFSL…LHLG). The heme b site is built by histidine 88 and histidine 102. Heme b contacts are provided by histidine 189 and histidine 203. Histidine 208 contacts a ubiquinone. The next 4 helical transmembrane spans lie at 231–251 (YYVK…IFIF), 295–316 (AGGV…FLNQ), 328–348 (IYHI…WIGC), and 355–374 (FVTI…AIMP).

This sequence belongs to the cytochrome b family. In terms of assembly, the main subunits of complex b-c1 are: cytochrome b, cytochrome c1 and the Rieske protein. It depends on heme b as a cofactor.

It localises to the mitochondrion inner membrane. Component of the ubiquinol-cytochrome c reductase complex (complex III or cytochrome b-c1 complex) that is part of the mitochondrial respiratory chain. The b-c1 complex mediates electron transfer from ubiquinol to cytochrome c. Contributes to the generation of a proton gradient across the mitochondrial membrane that is then used for ATP synthesis. This chain is Cytochrome b (MT-CYB), found in Daucus carota (Wild carrot).